Here is a 438-residue protein sequence, read N- to C-terminus: Chromosomal replication initiator protein DnaA (438 aa).

Residues 1–71 (MTELDSLWEA…VEIVYQRTGQ (71 aa)) form a domain I, interacts with DnaA modulators region. The domain II stretch occupies residues 71 to 101 (QEIRPDYVLATDPTPLAQTPPRPQSTFKEET). Residues 81–100 (TDPTPLAQTPPRPQSTFKEE) form a disordered region. The domain III, AAA+ region stretch occupies residues 102–318 (PLNPEYTFQT…GALMRIRVFS (217 aa)). Positions 146, 148, 149, and 150 each coordinate ATP. The tract at residues 319–438 (ELHQQPITLK…LVKLKNDLQA (120 aa)) is domain IV, binds dsDNA.

The protein belongs to the DnaA family. In terms of assembly, oligomerizes as a right-handed, spiral filament on DNA at oriC.

The protein localises to the cytoplasm. Plays an essential role in the initiation and regulation of chromosomal replication. ATP-DnaA binds to the origin of replication (oriC) to initiate formation of the DNA replication initiation complex once per cell cycle. Binds the DnaA box (a 9 base pair repeat at the origin) and separates the double-stranded (ds)DNA. Forms a right-handed helical filament on oriC DNA; dsDNA binds to the exterior of the filament while single-stranded (ss)DNA is stabiized in the filament's interior. The ATP-DnaA-oriC complex binds and stabilizes one strand of the AT-rich DNA unwinding element (DUE), permitting loading of DNA polymerase. After initiation quickly degrades to an ADP-DnaA complex that is not apt for DNA replication. Binds acidic phospholipids. In Limosilactobacillus fermentum (strain NBRC 3956 / LMG 18251) (Lactobacillus fermentum), this protein is Chromosomal replication initiator protein DnaA.